We begin with the raw amino-acid sequence, 397 residues long: Alpha-lytic protease (397 aa).

An N-terminal signal peptide occupies residues 1-24; it reads MYVSNHRSRRVARVSVSCLVAALA. Residues 25–199 constitute a propeptide that is removed on maturation; sequence AMSCGAALAA…ESSPGKLQTT (175 aa). Cys-216 and Cys-236 are oxidised to a cystine. Residues His-235 and Asp-262 each act as charge relay system in the active site. Cystine bridges form between Cys-300–Cys-310 and Cys-336–Cys-369. Ser-342 serves as the catalytic Charge relay system.

The protein belongs to the peptidase S1 family.

It catalyses the reaction Preferential cleavage: Ala-|-Xaa, Val-|-Xaa in bacterial cell walls, elastin and other proteins.. This chain is Alpha-lytic protease (alpha-LP), found in Lysobacter enzymogenes.